The chain runs to 244 residues: tRNA pseudouridine synthase A (244 aa).

Catalysis depends on Asp-52, which acts as the Nucleophile. Tyr-110 contributes to the substrate binding site.

The protein belongs to the tRNA pseudouridine synthase TruA family. In terms of assembly, homodimer.

It carries out the reaction uridine(38/39/40) in tRNA = pseudouridine(38/39/40) in tRNA. Its function is as follows. Formation of pseudouridine at positions 38, 39 and 40 in the anticodon stem and loop of transfer RNAs. The polypeptide is tRNA pseudouridine synthase A (Geotalea daltonii (strain DSM 22248 / JCM 15807 / FRC-32) (Geobacter daltonii)).